Reading from the N-terminus, the 522-residue chain is Light-independent protochlorophyllide reductase subunit B (522 aa).

[4Fe-4S] cluster is bound at residue D36. Catalysis depends on D274, which acts as the Proton donor. Residue 409-410 (GL) coordinates substrate. The interval 426-464 (DEAGPSHHGGKAVPASAPRAEATADEGSTPEEAVPPVAA) is disordered. The segment covering 455-464 (PEEAVPPVAA) has biased composition (low complexity).

Belongs to the ChlB/BchB/BchZ family. In terms of assembly, protochlorophyllide reductase is composed of three subunits; BchL, BchN and BchB. Forms a heterotetramer of two BchB and two BchN subunits. [4Fe-4S] cluster is required as a cofactor.

The catalysed reaction is chlorophyllide a + oxidized 2[4Fe-4S]-[ferredoxin] + 2 ADP + 2 phosphate = protochlorophyllide a + reduced 2[4Fe-4S]-[ferredoxin] + 2 ATP + 2 H2O. Its pathway is porphyrin-containing compound metabolism; bacteriochlorophyll biosynthesis (light-independent). Functionally, component of the dark-operative protochlorophyllide reductase (DPOR) that uses Mg-ATP and reduced ferredoxin to reduce ring D of protochlorophyllide (Pchlide) to form chlorophyllide a (Chlide). This reaction is light-independent. The NB-protein (BchN-BchB) is the catalytic component of the complex. In Cereibacter sphaeroides (strain ATCC 17025 / ATH 2.4.3) (Rhodobacter sphaeroides), this protein is Light-independent protochlorophyllide reductase subunit B.